Consider the following 785-residue polypeptide: Ubiquitin carboxyl-terminal hydrolase 1 (785 aa).

Disordered stretches follow at residues 1–21 (MPGVIPSESNGLSRGSPSKKN) and 33–52 (TKRALDFTDSQENEEKASEY). Residues 7–16 (SESNGLSRGS) are compositionally biased toward polar residues. A phosphoserine mark is found at Ser-16, Ser-42, and Ser-67. One can recognise a USP domain in the interval 81–785 (VGLNNLGNTC…TPYLLFYKKL (705 aa)). The Nucleophile role is filled by Cys-90. Basic and acidic residues-rich tracts occupy residues 258–275 (EDFKEKLPKGNGKRKSDT) and 286–298 (LSKEHQSLEENQR). The disordered stretch occupies residues 258-336 (EDFKEKLPKG…SPRPSQKKSR (79 aa)). 2 positions are modified to phosphoserine: Ser-313 and Ser-475. The active-site Proton acceptor is the His-593. Positions 693 to 723 (TAFAENRNSETSDTTGTHESDRNKESSDQTG) are disordered. Positions 708-719 (GTHESDRNKESS) are enriched in basic and acidic residues. Ser-768 carries the post-translational modification Phosphoserine.

Belongs to the peptidase C19 family. Interacts with FANCD2 and PCNA. Interacts with WDR48. Interacts with ATAD5; the interaction regulates USP1-mediated PCNA deubiquitination. Autocatalytic cleavage of USP1 following UV irradiation inactivates it, leading to an increase in ubiquitinated PCNA, recruitment of POLH and translesion synthesis. Post-translationally, ubiquitinated by the CRL2(KLHDC2) complex following autocatalytic cleavage, leading to its degradation: the CRL2(KLHDC2) complex recognizes the diglycine (Gly-Gly) at the C-terminus.

It is found in the nucleus. It catalyses the reaction Thiol-dependent hydrolysis of ester, thioester, amide, peptide and isopeptide bonds formed by the C-terminal Gly of ubiquitin (a 76-residue protein attached to proteins as an intracellular targeting signal).. In terms of biological role, negative regulator of DNA damage repair which specifically deubiquitinates monoubiquitinated FANCD2. Also involved in PCNA-mediated translesion synthesis (TLS) by deubiquitinating monoubiquitinated PCNA. Has almost no deubiquitinating activity by itself and requires the interaction with WDR48 to have a high activity. This chain is Ubiquitin carboxyl-terminal hydrolase 1 (USP1), found in Homo sapiens (Human).